The chain runs to 308 residues: 4-hydroxy-tetrahydrodipicolinate synthase (308 aa).

Thr53 is a binding site for pyruvate. Tyr141 (proton donor/acceptor) is an active-site residue. Lys169 functions as the Schiff-base intermediate with substrate in the catalytic mechanism. Val209 lines the pyruvate pocket.

It belongs to the DapA family. Homotetramer; dimer of dimers.

It localises to the cytoplasm. It catalyses the reaction L-aspartate 4-semialdehyde + pyruvate = (2S,4S)-4-hydroxy-2,3,4,5-tetrahydrodipicolinate + H2O + H(+). The protein operates within amino-acid biosynthesis; L-lysine biosynthesis via DAP pathway; (S)-tetrahydrodipicolinate from L-aspartate: step 3/4. In terms of biological role, catalyzes the condensation of (S)-aspartate-beta-semialdehyde [(S)-ASA] and pyruvate to 4-hydroxy-tetrahydrodipicolinate (HTPA). This is 4-hydroxy-tetrahydrodipicolinate synthase from Acidothermus cellulolyticus (strain ATCC 43068 / DSM 8971 / 11B).